We begin with the raw amino-acid sequence, 154 residues long: U1 small nuclear ribonucleoprotein C (154 aa).

The Matrin-type zinc-finger motif lies at 4–36 (YYCDYCDTYLTHDSPSVRKTHCTGRKHKDNVKF).

Belongs to the U1 small nuclear ribonucleoprotein C family. As to quaternary structure, U1 snRNP is composed of the 7 core Sm proteins B/B', D1, D2, D3, E, F and G that assemble in a heptameric protein ring on the Sm site of the small nuclear RNA to form the core snRNP, and at least 3 U1 snRNP-specific proteins U1-70K, U1-A and U1-C. U1-C interacts with U1 snRNA and the 5' splice-site region of the pre-mRNA.

The protein resides in the nucleus. In terms of biological role, component of the spliceosomal U1 snRNP, which is essential for recognition of the pre-mRNA 5' splice-site and the subsequent assembly of the spliceosome. U1-C is directly involved in initial 5' splice-site recognition for both constitutive and regulated alternative splicing. The interaction with the 5' splice-site seems to precede base-pairing between the pre-mRNA and the U1 snRNA. Stimulates commitment or early (E) complex formation by stabilizing the base pairing of the 5' end of the U1 snRNA and the 5' splice-site region. This chain is U1 small nuclear ribonucleoprotein C, found in Aedes aegypti (Yellowfever mosquito).